A 626-amino-acid chain; its full sequence is Probable potassium transport system protein Kup (626 aa).

A run of 12 helical transmembrane segments spans residues 13–33 (VALM…SPLY), 53–73 (VLSI…VLLI), 102–122 (FFVV…MITP), 138–158 (HTLD…LFAI), 169–189 (LFGP…GWQV), 207–227 (FVFE…LALT), 248–268 (WFSM…ALLL), 277–297 (PFFL…ATVA), 338–358 (IYLP…VITF), 367–387 (AYGF…FAVL), 399–419 (WMLV…ANIF), and 421–441 (IHEG…LMMT).

It belongs to the HAK/KUP transporter (TC 2.A.72) family.

Its subcellular location is the cell inner membrane. It catalyses the reaction K(+)(in) + H(+)(in) = K(+)(out) + H(+)(out). Functionally, transport of potassium into the cell. Likely operates as a K(+):H(+) symporter. The protein is Probable potassium transport system protein Kup of Bordetella avium (strain 197N).